A 224-amino-acid chain; its full sequence is Charged multivesicular body protein 4c (224 aa).

Disordered regions lie at residues 1–21 (MSVF…PTPQ) and 182–224 (SGPE…AWAM). Over residues 7–17 (LFGGGGKGGKG) the composition is skewed to gly residues. Positions 21-221 (QEAIQKLRET…DEDDMEELKA (201 aa)) form a coiled coil.

The protein belongs to the SNF7 family. In terms of assembly, probable core component of the endosomal sorting required for transport complex III (ESCRT-III). ESCRT-III components are thought to multimerize to form a flat lattice on the perimeter membrane of the endosome.

The protein localises to the cytoplasm. It localises to the cytosol. It is found in the late endosome membrane. In terms of biological role, probable core component of the endosomal sorting required for transport complex III (ESCRT-III) which is involved in multivesicular bodies (MVBs) formation and sorting of endosomal cargo proteins into MVBs. MVBs contain intraluminal vesicles (ILVs) that are generated by invagination and scission from the limiting membrane of the endosome and mostly are delivered to lysosomes enabling degradation of membrane proteins, such as stimulated growth factor receptors, lysosomal enzymes and lipids. Key component of the cytokinesis checkpoint, a process required to delay abscission to prevent both premature resolution of intercellular chromosome bridges and accumulation of DNA damage. The polypeptide is Charged multivesicular body protein 4c (chmp4c) (Danio rerio (Zebrafish)).